Consider the following 538-residue polypeptide: Fructooligosaccharide ABC transporter substrate-binding protein FusA (538 aa).

Residues 1-22 (MKFKTFSKSAVLLTASLAVLAA) form the signal peptide. The N-palmitoyl cysteine moiety is linked to residue C23. C23 carries S-diacylglycerol cysteine lipidation. E167 is a binding site for substrate. Residues D215, N217, N219, E221, D223, and E224 each contribute to the Ca(2+) site. N235 serves as a coordination point for substrate. Ca(2+)-binding residues include D263, F264, D267, and N268. Residues W314, N318, K353, W384, R419, and E423 each contribute to the substrate site.

This sequence belongs to the bacterial solute-binding protein 1 family. In terms of assembly, the complex is composed of two ATP-binding proteins (MsmK), two transmembrane proteins (FusB and FusC) and a solute-binding protein (FusA).

The protein resides in the cell membrane. Functionally, part of the ABC transporter complex FusABC-MsmK involved in short- and long-chain fructooligosaccharide (FOS) import. Required for the utilization of long-chain FOSs. Binds kestose, nystose, fructofuranosyl-nystose and inulin, but not sucrose. Has a preference for long-chain FOSs (tetrasaccharides and larger). The chain is Fructooligosaccharide ABC transporter substrate-binding protein FusA from Streptococcus pneumoniae serotype 4 (strain ATCC BAA-334 / TIGR4).